We begin with the raw amino-acid sequence, 551 residues long: Membrane protein insertase YidC (551 aa).

Residues 3–23 (ANHIRILLLVTIAIMFISLMG) form a helical membrane-spanning segment. The span at 33–47 (NTKQQTSATQNNSHY) shows a compositional bias: polar residues. A disordered region spans residues 33 to 59 (NTKQQTSATQNNSHYDNADSSTNTDVT). Low complexity predominate over residues 50–59 (ADSSTNTDVT). The next 3 helical transmembrane spans lie at 361–381 (LVGN…LIFY), 431–451 (LSGC…YWVL), and 504–524 (VMMF…SGLV).

The protein belongs to the OXA1/ALB3/YidC family. Type 1 subfamily. Interacts with the Sec translocase complex via SecD. Specifically interacts with transmembrane segments of nascent integral membrane proteins during membrane integration.

Its subcellular location is the cell inner membrane. In terms of biological role, required for the insertion and/or proper folding and/or complex formation of integral membrane proteins into the membrane. Involved in integration of membrane proteins that insert both dependently and independently of the Sec translocase complex, as well as at least some lipoproteins. Aids folding of multispanning membrane proteins. The protein is Membrane protein insertase YidC of Francisella tularensis subsp. tularensis (strain SCHU S4 / Schu 4).